The chain runs to 119 residues: Beta-2-microglobulin (119 aa).

The N-terminal stretch at 1-20 (MARSVVVSLFVLLALAGLEA) is a signal peptide. Positions 25–114 (PKIQVYSRHP…VTFQTPKTVK (90 aa)) constitute an Ig-like C1-type domain.

This sequence belongs to the beta-2-microglobulin family. Heterodimer of an alpha chain and a beta chain. Beta-2-microglobulin is the beta-chain of major histocompatibility complex class I molecules.

The protein localises to the secreted. Component of the class I major histocompatibility complex (MHC). Involved in the presentation of peptide antigens to the immune system. This is Beta-2-microglobulin (B2M) from Brachyteles arachnoides (Southern muriqui).